Consider the following 237-residue polypeptide: Demethylmenaquinone methyltransferase (237 aa).

S-adenosyl-L-methionine-binding positions include Thr-58, Asp-79, and 106–107 (NA).

This sequence belongs to the class I-like SAM-binding methyltransferase superfamily. MenG/UbiE family.

The catalysed reaction is a 2-demethylmenaquinol + S-adenosyl-L-methionine = a menaquinol + S-adenosyl-L-homocysteine + H(+). Its pathway is quinol/quinone metabolism; menaquinone biosynthesis; menaquinol from 1,4-dihydroxy-2-naphthoate: step 2/2. Methyltransferase required for the conversion of demethylmenaquinol (DMKH2) to menaquinol (MKH2). The chain is Demethylmenaquinone methyltransferase from Bacillus cytotoxicus (strain DSM 22905 / CIP 110041 / 391-98 / NVH 391-98).